A 489-amino-acid chain; its full sequence is Long chain base biosynthesis protein 2d (489 aa).

A helical transmembrane segment spans residues 4–24 (LPYVTALTTLFSYGLLFAFGQ). Lys311 is subject to N6-(pyridoxal phosphate)lysine.

It belongs to the class-II pyridoxal-phosphate-dependent aminotransferase family. In terms of assembly, heterodimer with LCB1. Component of the serine palmitoyltransferase (SPT) complex, composed of LCB1 and LCB2. Requires pyridoxal 5'-phosphate as cofactor.

The protein resides in the endoplasmic reticulum membrane. It catalyses the reaction L-serine + hexadecanoyl-CoA + H(+) = 3-oxosphinganine + CO2 + CoA. Its pathway is lipid metabolism; sphingolipid metabolism. In terms of biological role, serine palmitoyltransferase (SPT). The heterodimer formed with LCB1 constitutes the catalytic core. The polypeptide is Long chain base biosynthesis protein 2d (Oryza sativa subsp. japonica (Rice)).